We begin with the raw amino-acid sequence, 624 residues long: DNA mismatch repair protein MutL (624 aa).

A disordered region spans residues 360-396 (GGNHFSQPAPRRETASTEPAVARERAPQPAYHSGSGY). Over residues 369–385 (PRRETASTEPAVARERA) the composition is skewed to basic and acidic residues.

It belongs to the DNA mismatch repair MutL/HexB family.

Its function is as follows. This protein is involved in the repair of mismatches in DNA. It is required for dam-dependent methyl-directed DNA mismatch repair. May act as a 'molecular matchmaker', a protein that promotes the formation of a stable complex between two or more DNA-binding proteins in an ATP-dependent manner without itself being part of a final effector complex. This Serratia proteamaculans (strain 568) protein is DNA mismatch repair protein MutL.